A 92-amino-acid polypeptide reads, in one-letter code: Putative regulatory protein Tpet_0986 (92 aa).

Belongs to the RemA family.

In Thermotoga petrophila (strain ATCC BAA-488 / DSM 13995 / JCM 10881 / RKU-1), this protein is Putative regulatory protein Tpet_0986.